The following is a 408-amino-acid chain: DNA primase DnaG (408 aa).

The Toprim domain maps to 172-248 (DSIIIVEGRA…HVDYIARAPP (77 aa)). The Mg(2+) site is built by Glu178, Asp222, and Asp224. The tract at residues 279–304 (AAGEKAETPQQPPPQQPVPQQEVREE) is disordered.

The protein belongs to the archaeal DnaG primase family. As to quaternary structure, forms a ternary complex with MCM helicase and DNA. Component of the archaeal exosome complex. Mg(2+) serves as cofactor.

The catalysed reaction is ssDNA + n NTP = ssDNA/pppN(pN)n-1 hybrid + (n-1) diphosphate.. RNA polymerase that catalyzes the synthesis of short RNA molecules used as primers for DNA polymerase during DNA replication. Also part of the exosome, which is a complex involved in RNA degradation. Acts as a poly(A)-binding protein that enhances the interaction between heteromeric, adenine-rich transcripts and the exosome. The protein is DNA primase DnaG of Pyrobaculum aerophilum (strain ATCC 51768 / DSM 7523 / JCM 9630 / CIP 104966 / NBRC 100827 / IM2).